The sequence spans 110 residues: Cell cycle protein GpsB (110 aa).

A coiled-coil region spans residues 37 to 63 (KDYTVYIALVKELQEENAKLKAKATSA). The tract at residues 59–79 (KATSAPASRPAYASATSEPSH) is disordered. The span at 60 to 75 (ATSAPASRPAYASATS) shows a compositional bias: low complexity.

It belongs to the GpsB family. As to quaternary structure, forms polymers through the coiled coil domains. Interacts with PBP1, MreC and EzrA.

The protein localises to the cytoplasm. Its function is as follows. Divisome component that associates with the complex late in its assembly, after the Z-ring is formed, and is dependent on DivIC and PBP2B for its recruitment to the divisome. Together with EzrA, is a key component of the system that regulates PBP1 localization during cell cycle progression. Its main role could be the removal of PBP1 from the cell pole after pole maturation is completed. Also contributes to the recruitment of PBP1 to the division complex. Not essential for septum formation. The sequence is that of Cell cycle protein GpsB from Streptococcus thermophilus (strain CNRZ 1066).